The chain runs to 269 residues: 5'-nucleotidase SurE (269 aa).

Residues D8, D9, S39, and N92 each coordinate a divalent metal cation.

The protein belongs to the SurE nucleotidase family. A divalent metal cation is required as a cofactor.

It is found in the cytoplasm. The enzyme catalyses a ribonucleoside 5'-phosphate + H2O = a ribonucleoside + phosphate. Its function is as follows. Nucleotidase that shows phosphatase activity on nucleoside 5'-monophosphates. This Psychrobacter cryohalolentis (strain ATCC BAA-1226 / DSM 17306 / VKM B-2378 / K5) protein is 5'-nucleotidase SurE.